Consider the following 378-residue polypeptide: Alginate lyase (378 aa).

An N-terminal signal peptide occupies residues 1–28 (MQTPKLIRPTLLSMAIVSSMAWATGASA). Substrate is bound by residues 67–68 (SK), 140–141 (HT), and tyrosine 258.

This sequence belongs to the polysaccharide lyase 5 family.

The protein localises to the periplasm. It catalyses the reaction Eliminative cleavage of alginate to give oligosaccharides with 4-deoxy-alpha-L-erythro-hex-4-enuronosyl groups at their non-reducing ends and beta-D-mannuronate at their reducing end.. Functionally, catalyzes the depolymerization of alginate by cleaving the beta-1,4 glycosidic bond between two adjacent sugar residues via a beta-elimination mechanism. May serve to degrade mislocalized alginate that is trapped in the periplasmic space. The chain is Alginate lyase from Pseudomonas syringae pv. tomato (strain ATCC BAA-871 / DC3000).